A 373-amino-acid polypeptide reads, in one-letter code: SWI/SNF-related matrix-associated actin-dependent regulator of chromatin subfamily B member 1 (373 aa).

The DNA-binding stretch occupies residues 1-101 (MALSKAFGQK…DEKYKAVSIS (101 aa)).

It belongs to the SNF5 family. In terms of assembly, component of the multiprotein chromatin-remodeling complexes SWI/SNF. Component of neural progenitors-specific chromatin remodeling complex (npBAF complex) and the neuron-specific chromatin remodeling complex (nBAF complex). Component of the BAF (SWI/SNF) chromatin remodeling complex. Component of the SWI/SNF-B (PBAF) chromatin remodeling complex. Binds to double-stranded DNA.

Its subcellular location is the nucleus. Involved in chromatin-remodeling. Core component of the BAF (SWI/SNF) complex. This ATP-dependent chromatin-remodeling complex plays important roles in cell proliferation and differentiation, in cellular antiviral activities and inhibition of tumor formation. Belongs to the neural progenitors-specific chromatin remodeling complex (npBAF complex) and the neuron-specific chromatin remodeling complex (nBAF complex) and may play a role in neural development. The polypeptide is SWI/SNF-related matrix-associated actin-dependent regulator of chromatin subfamily B member 1 (smarcb1) (Dichotomyctere fluviatilis (Green pufferfish)).